Here is a 214-residue protein sequence, read N- to C-terminus: Cytolysin tenebrosin-B (214 aa).

The N-terminal stretch at 1–19 (MNRLIIVFIVVTMICAATA) is a signal peptide. A propeptide spanning residues 20 to 35 (LSTKRRINKEEKDEKR) is cleaved from the precursor. The plays an important role in the hemolytic activity stretch occupies residues 38–47 (AVAGAVIEGA). The tract at residues 46-65 (GATLTFNVLQTVLKALGDIS) is N-terminal region. Phosphocholine-binding residues include serine 89, valine 122, serine 140, proline 142, tyrosine 168, tyrosine 172, and tyrosine 173. The trp-rich region, which is important for the binding to lipid membrane stretch occupies residues 140 to 155 (SIPFDYNLYSNWWNVK). The Cell attachment site, crucial for protein stability motif lies at 179–181 (RGD).

The protein belongs to the actinoporin family. Sea anemone subfamily. Octamer or nonamer in membranes. Monomer in the soluble state.

It is found in the secreted. The protein resides in the nematocyst. The protein localises to the target cell membrane. In terms of biological role, pore-forming protein that forms cations-selective hydrophilic pores of around 1 nm and causes cardiac stimulation and cytolysis. Pore formation is a multi-step process that involves specific recognition of membrane sphingomyelin (but neither cholesterol nor phosphatidylcholine) using aromatic rich region and adjacent phosphocholine (POC) binding site, firm binding to the membrane (mainly driven by hydrophobic interactions) accompanied by the transfer of the N-terminal region to the lipid-water interface and finally pore formation after oligomerization of monomers. This is Cytolysin tenebrosin-B from Actinia tenebrosa (Australian red waratah sea anemone).